The sequence spans 465 residues: Uronate isomerase (465 aa).

The protein belongs to the metallo-dependent hydrolases superfamily. Uronate isomerase family.

The enzyme catalyses D-glucuronate = D-fructuronate. The catalysed reaction is aldehydo-D-galacturonate = keto-D-tagaturonate. It participates in carbohydrate metabolism; pentose and glucuronate interconversion. The polypeptide is Uronate isomerase (Streptococcus equi subsp. zooepidemicus (strain MGCS10565)).